A 430-amino-acid chain; its full sequence is von Willebrand factor (430 aa).

N-linked (GlcNAc...) asparagine glycosylation occurs at asparagine 6. Cysteine 9 and cysteine 12 are oxidised to a cystine. Threonine 23, threonine 30, and threonine 31 each carry an O-linked (GalNAc...) threonine glycan. A disulfide bridge connects residues cysteine 47 and cysteine 233. The 177-residue stretch at 52-228 folds into the VWFA 1; binding site for platelet glycoprotein Ib domain; sequence DLVFLLDGSY…DELEQRRDEI (177 aa). Residue threonine 252 is glycosylated (O-linked (GalNAc...) threonine). An O-linked (GalNAc...) serine glycan is attached at serine 261. The 158-residue stretch at 273–430 folds into the VWFA 2 domain; the sequence is DVVFVLEASD…ITPIFIQDFE (158 aa). N-linked (GlcNAc...) asparagine glycosylation is found at asparagine 290 and asparagine 349.

As to quaternary structure, multimeric. Interacts with F8. N- and O-glycosylated. Plasma.

The protein localises to the secreted. The protein resides in the extracellular space. It is found in the extracellular matrix. Important in the maintenance of hemostasis, it promotes adhesion of platelets to the sites of vascular injury by forming a molecular bridge between sub-endothelial collagen matrix and platelet-surface receptor complex GPIb-IX-V. Also acts as a chaperone for coagulation factor VIII, delivering it to the site of injury, stabilizing its heterodimeric structure and protecting it from premature clearance from plasma. This Rattus norvegicus (Rat) protein is von Willebrand factor.